The following is a 172-amino-acid chain: Immune protein Tsi1 (172 aa).

A signal peptide spans 1–19 (MKLLAGSFAALFLSLSAQA). 3 disulfides stabilise this stretch: cysteine 22-cysteine 167, cysteine 79-cysteine 121, and cysteine 147-cysteine 155.

Forms a heterotetramer with Tse1 consisting of two Tse1 dimers and two Tsi1 dimers. Formation of the complex inactivates Tse1 enzymatic activity.

Immunity protein that plays a role in preventing early activation of toxin Tse1. Binds to a large surface of Tse1 and thereby occludes the active site to specifically inhibits enzyme activity by forming a hydrogen bond with the catalytic diad. This is Immune protein Tsi1 from Pseudomonas aeruginosa (strain ATCC 15692 / DSM 22644 / CIP 104116 / JCM 14847 / LMG 12228 / 1C / PRS 101 / PAO1).